Here is a 151-residue protein sequence, read N- to C-terminus: 3-dehydroquinate dehydratase (151 aa).

Tyrosine 24 functions as the Proton acceptor in the catalytic mechanism. 3 residues coordinate substrate: asparagine 76, histidine 82, and aspartate 89. Histidine 102 functions as the Proton donor in the catalytic mechanism. Residues 103 to 104 (VS) and arginine 113 each bind substrate.

The protein belongs to the type-II 3-dehydroquinase family. As to quaternary structure, homododecamer.

The enzyme catalyses 3-dehydroquinate = 3-dehydroshikimate + H2O. It functions in the pathway metabolic intermediate biosynthesis; chorismate biosynthesis; chorismate from D-erythrose 4-phosphate and phosphoenolpyruvate: step 3/7. Functionally, catalyzes a trans-dehydration via an enolate intermediate. The chain is 3-dehydroquinate dehydratase from Afipia carboxidovorans (strain ATCC 49405 / DSM 1227 / KCTC 32145 / OM5) (Oligotropha carboxidovorans).